Consider the following 605-residue polypeptide: SET domain-containing protein SNOG_11806 (605 aa).

The disordered stretch occupies residues 68–132; sequence TLDLTGMKTP…SRKGTGGLRV (65 aa). Over residues 75–89 the composition is skewed to polar residues; it reads KTPQPSRSPTVTRNV. The segment covering 104–115 has biased composition (acidic residues); it reads ESADDDDDDLQD. One can recognise an SET domain in the interval 473–579; that stretch reads PPVQIYRTAE…AGSEITVDYG (107 aa).

Belongs to the class V-like SAM-binding methyltransferase superfamily.

This Phaeosphaeria nodorum (strain SN15 / ATCC MYA-4574 / FGSC 10173) (Glume blotch fungus) protein is SET domain-containing protein SNOG_11806.